The following is a 472-amino-acid chain: FAD-dependent monooxygenase ltmM (472 aa).

A helical membrane pass occupies residues 7 to 27; it reads VIIVGGSVAGLSLAHCLEKIG. Positions 34, 48, and 107 each coordinate FAD. Asn186 is a glycosylation site (N-linked (GlcNAc...) asparagine). 2 residues coordinate FAD: Asp306 and Ala319. A helical transmembrane segment spans residues 450 to 470; it reads IVYALYLVAAAAFILYCLSSL.

It belongs to the paxM FAD-dependent monooxygenase family. FAD serves as cofactor.

Its subcellular location is the membrane. It functions in the pathway secondary metabolite biosynthesis. In terms of biological role, FAD-dependent monooxygenase; part of the gene cluster that mediates the biosynthesis of lolitrems, indole-diterpene mycotoxins that are potent tremorgens in mammals, and are synthesized by clavicipitaceous fungal endophytes in association with their grass hosts. The geranylgeranyl diphosphate (GGPP) synthase ltmG is proposed to catalyze the first step in lolitremB biosynthesis. LtmG catalyzes a series of iterative condensations of isopentenyl diphosphate (IPP) with dimethylallyl diphosphate (DMAPP), geranyl diphosphate (GPP), and farnesyl diphosphate (FPP), to form GGPP. GGPP then condenses with indole-3-glycerol phosphate to form 3-geranylgeranylindole, an acyclic intermediate, to be incorporated into paxilline. Either ltmG or ltmC could be responsible for this step, as both are putative prenyl transferases. The FAD-dependent monooxygenase ltmM then catalyzes the epoxidation of the two terminal alkenes of the geranylgeranyl moiety, which is subsequently cyclized by ltmB, to paspaline. The cytochrome P450 monooxygenases ltmQ and ltmP can sequentially oxidize paspaline to terpendole E and terpendole F. Alternatively, ltmP converts paspaline to an intermediate which is oxidized by ltmQ to terpendole F. LtmF, ltmK, ltmE and ltmJ appear to be unique to the epichloe endophytes. The prenyltransferase ltmF is involved in the 27-hydroxyl-O-prenylation. The cytochrome P450 monooxygenase ltmK is required for the oxidative acetal ring formation. The multi-functional prenyltransferase ltmE is required for C20- and C21-prenylations of the indole ring of paspalanes and acts together with the cytochrome P450 monooxygenase ltmJ to yield lolitremanes by multiple oxidations and ring closures. The stereoisomer pairs of lolitriol and lolitrem N or lolitrem B and lolitrem F may be attributed to variations in the way in which ring closure can occur under the action of ltmJ. While the major product of this pathway is lolitrem B, the prenyl transferases and cytochrome P450 monooxygenases identified in this pathway have a remarkable versatility in their regio- and stereo-specificities to generate a diverse range of metabolites that are products of a metabolic grid rather than a linear pathway. This chain is FAD-dependent monooxygenase ltmM (ltmM), found in Epichloe festucae var. lolii (Neotyphodium lolii).